The following is a 119-amino-acid chain: MALKIRLRQQGRRNHVVYRLVLADVESPRDGRYIELLGWYDPHSTVNYQLKSERIFHWLNQGAELTEKAAVLIKQGAPGVYSELMAKKMTRKAVMCQKRRAYRQRRSLKRAETAQAVSK.

This sequence belongs to the bacterial ribosomal protein bS16 family.

The protein is Small ribosomal subunit protein bS16 of Chlamydia felis (strain Fe/C-56) (Chlamydophila felis).